Reading from the N-terminus, the 473-residue chain is Photosystem II CP43 reaction center protein (473 aa).

The propeptide occupies 1–14; sequence MKTLYSLRRFYPVE. At T15 the chain carries N-acetylthreonine. T15 carries the phosphothreonine modification. 5 consecutive transmembrane segments (helical) span residues 69-93, 134-155, 178-200, 255-275, and 291-312; these read LFEVAHFVPEKPMYEQGLILLPHLA, LLGPETLEESFPFFGYVWKDRN, KALYFGGVYDTWAPGGGDVRKIT, KPFAWARRALVWSGEAYLSYS, and WFNNTAYPSEFYGPTGPEASQA. Residue E367 participates in [CaMn4O5] cluster binding. A helical transmembrane segment spans residues 447–471; it reads RARAAAAGFEKGIDRDFEPVLSMTP.

It belongs to the PsbB/PsbC family. PsbC subfamily. PSII is composed of 1 copy each of membrane proteins PsbA, PsbB, PsbC, PsbD, PsbE, PsbF, PsbH, PsbI, PsbJ, PsbK, PsbL, PsbM, PsbT, PsbX, PsbY, PsbZ, Psb30/Ycf12, at least 3 peripheral proteins of the oxygen-evolving complex and a large number of cofactors. It forms dimeric complexes. Binds multiple chlorophylls and provides some of the ligands for the Ca-4Mn-5O cluster of the oxygen-evolving complex. It may also provide a ligand for a Cl- that is required for oxygen evolution. PSII binds additional chlorophylls, carotenoids and specific lipids. serves as cofactor.

The protein resides in the plastid. Its subcellular location is the chloroplast thylakoid membrane. Functionally, one of the components of the core complex of photosystem II (PSII). It binds chlorophyll and helps catalyze the primary light-induced photochemical processes of PSII. PSII is a light-driven water:plastoquinone oxidoreductase, using light energy to abstract electrons from H(2)O, generating O(2) and a proton gradient subsequently used for ATP formation. This is Photosystem II CP43 reaction center protein from Morus indica (Mulberry).